Consider the following 355-residue polypeptide: Uroporphyrinogen decarboxylase (355 aa).

Residues 38 to 42 (RQAGR), Asp-87, Tyr-162, Ser-217, and His-331 contribute to the substrate site.

It belongs to the uroporphyrinogen decarboxylase family. Homodimer.

It is found in the cytoplasm. It carries out the reaction uroporphyrinogen III + 4 H(+) = coproporphyrinogen III + 4 CO2. Its pathway is porphyrin-containing compound metabolism; protoporphyrin-IX biosynthesis; coproporphyrinogen-III from 5-aminolevulinate: step 4/4. In terms of biological role, catalyzes the decarboxylation of four acetate groups of uroporphyrinogen-III to yield coproporphyrinogen-III. This is Uroporphyrinogen decarboxylase from Streptomyces avermitilis (strain ATCC 31267 / DSM 46492 / JCM 5070 / NBRC 14893 / NCIMB 12804 / NRRL 8165 / MA-4680).